The chain runs to 561 residues: Transmembrane protein 209 (561 aa).

2 positions are modified to phosphoserine: S9 and S11. A helical transmembrane segment spans residues 28 to 48 (VVLAWGLLNVSMAGMIYTEMT). N-linked (GlcNAc...) asparagine glycosylation occurs at N57. Residues 60–80 (YWPLWYIELALASLFSLNALF) form a helical membrane-spanning segment. S98 bears the Phosphoserine mark. Disordered stretches follow at residues 120–156 (LAATQISPSPPSPSIQGQSVLSYSPSRSPSTSPKFAT) and 196–233 (SLSPSSPYPTTVGPVESSGLRARYRSPPTAYNSPTDKE). The span at 138 to 152 (SVLSYSPSRSPSTSP) shows a compositional bias: low complexity. S201 and S248 each carry phosphoserine. Positions 250–270 (EEKQHRVKLGSPDSTSPSTSP) are disordered. The span at 260 to 270 (SPDSTSPSTSP) shows a compositional bias: low complexity. N-linked (GlcNAc...) asparagine glycosylation occurs at N274. S278 carries the post-translational modification Phosphoserine.

In terms of assembly, interacts with NUP205.

It localises to the membrane. Its subcellular location is the nucleus envelope. It is found in the golgi apparatus. The protein localises to the cytoplasm. Nuclear envelope protein which in association with NUP205, may be involved in nuclear transport of various nuclear proteins in addition to MYC. This is Transmembrane protein 209 (Tmem209) from Rattus norvegicus (Rat).